The following is a 466-amino-acid chain: 3-isopropylmalate dehydratase large subunit (466 aa).

Residues C347, C407, and C410 each coordinate [4Fe-4S] cluster.

The protein belongs to the aconitase/IPM isomerase family. LeuC type 1 subfamily. In terms of assembly, heterodimer of LeuC and LeuD. Requires [4Fe-4S] cluster as cofactor.

It catalyses the reaction (2R,3S)-3-isopropylmalate = (2S)-2-isopropylmalate. It participates in amino-acid biosynthesis; L-leucine biosynthesis; L-leucine from 3-methyl-2-oxobutanoate: step 2/4. Functionally, catalyzes the isomerization between 2-isopropylmalate and 3-isopropylmalate, via the formation of 2-isopropylmaleate. The polypeptide is 3-isopropylmalate dehydratase large subunit (Klebsiella pneumoniae (strain 342)).